A 187-amino-acid polypeptide reads, in one-letter code: Cytochrome c oxidase assembly protein CtaG (187 aa).

Residues 1 to 9 are Cytoplasmic-facing; sequence MSKKSNKNL. A helical; Signal-anchor for type II membrane protein membrane pass occupies residues 10–30; it reads AFSLLGLIISMVLLSFASVPI. Topologically, residues 31-187 are periplasmic; it reads YNLFCKVTGY…IASLRGNTKY (157 aa).

It belongs to the COX11/CtaG family.

The protein resides in the cell inner membrane. Exerts its effect at some terminal stage of cytochrome c oxidase synthesis, probably by being involved in the insertion of the copper B into subunit I. The chain is Cytochrome c oxidase assembly protein CtaG from Rickettsia felis (strain ATCC VR-1525 / URRWXCal2) (Rickettsia azadi).